The primary structure comprises 406 residues: Histidine--tRNA ligase (406 aa).

This sequence belongs to the class-II aminoacyl-tRNA synthetase family. In terms of assembly, homodimer.

The protein localises to the cytoplasm. It carries out the reaction tRNA(His) + L-histidine + ATP = L-histidyl-tRNA(His) + AMP + diphosphate + H(+). In Nitratiruptor sp. (strain SB155-2), this protein is Histidine--tRNA ligase.